A 173-amino-acid chain; its full sequence is Photosystem I assembly protein Ycf3 (173 aa).

TPR repeat units lie at residues 35–68 (AFSY…EIDP), 72–105 (SYIL…NPSL), and 120–153 (GEQA…APNS).

It belongs to the Ycf3 family.

The protein resides in the plastid. It localises to the chloroplast thylakoid membrane. In terms of biological role, essential for the assembly of the photosystem I (PSI) complex. May act as a chaperone-like factor to guide the assembly of the PSI subunits. In Mesostigma viride (Green alga), this protein is Photosystem I assembly protein Ycf3.